The following is a 63-amino-acid chain: Conotoxin Cal12.5 (63 aa).

The N-terminal stretch at 1–21 (MKVTCVLVVLLLLLPYGDLLG) is a signal peptide.

Belongs to the conotoxin O1 superfamily. In terms of processing, contains 4 disulfide bonds. In terms of tissue distribution, expressed by the venom duct.

It is found in the secreted. Probable neurotoxin. The polypeptide is Conotoxin Cal12.5 (Californiconus californicus (California cone)).